Here is a 238-residue protein sequence, read N- to C-terminus: Probable RNA/DNA demethylase ALKBH6 (238 aa).

One can recognise a Fe2OG dioxygenase domain in the interval 96–227 (PANHVLVNQY…RVSLTIRRVP (132 aa)). Asn103 and Tyr105 together coordinate 2-oxoglutarate. Residues His114, Asp116, and His182 each contribute to the Fe cation site. Positions 218 and 220 each coordinate 2-oxoglutarate.

The protein belongs to the alkB family. In terms of assembly, interacts with VCPKMT. It depends on Fe(2+) as a cofactor.

The protein localises to the cytoplasm. It localises to the nucleus. Its function is as follows. Probable Fe(2+)/2-oxoglutarate-dependent dioxygenase involved in oxidative demethylation of nucleic acids. Binds nucleic acids with a preference for ssDNA or ssRNA to other types of DNAs. May play a role in nucleic acid damage repair. This Mus musculus (Mouse) protein is Probable RNA/DNA demethylase ALKBH6 (Alkbh6).